The following is a 105-amino-acid chain: Secreted effector protein PINE1 (105 aa).

A signal peptide spans 1–21 (MKLSQPLSIFAILAASTVAVA).

Interacts with Arabidopsis thaliana PGIP1.

The protein resides in the secreted. In terms of biological role, effector protein required for full virulence. Directly interacts with and functionally inactivates PG-inhibiting proteins (PGIPs). PGIPs are a defense mechanism of infected plants, that inhibit the plant pathogens secreted polygalacturonases (PGs) used to degrade the plant cell wall. Excerts its function by interacting with host PGIPs to negate their polygalacturonase-inhibiting function via enhanced dissociation of PGIPs from PGs. The protein is Secreted effector protein PINE1 of Sclerotinia sclerotiorum (strain ATCC 18683 / 1980 / Ss-1) (White mold).